A 182-amino-acid polypeptide reads, in one-letter code: MASIMMNKSVVLSKECAKPLASPKVTLNKRGFATTIATKNRGMMVWQPFNNKMFETFSFLPPLTDEQISKQVDYILINSWTPCLEFAASDQAYAGNENCIRMGPVASTYQDNRYWTMWKLPMFGCTDASQVLSEIQACTKAFPDAYIRLVCFDANRQVQISGFLVHRPPSATDYKLPADRQV.

Residues 1–41 (MASIMMNKSVVLSKECAKPLASPKVTLNKRGFATTIATKNR) constitute a chloroplast transit peptide.

This sequence belongs to the RuBisCO small chain family. As to quaternary structure, heterohexadecamer of 8 large and 8 small subunits.

The protein localises to the plastid. It is found in the chloroplast. Functionally, ruBisCO catalyzes two reactions: the carboxylation of D-ribulose 1,5-bisphosphate, the primary event in carbon dioxide fixation, as well as the oxidative fragmentation of the pentose substrate. Both reactions occur simultaneously and in competition at the same active site. Although the small subunit is not catalytic it is essential for maximal activity. The protein is Ribulose bisphosphate carboxylase small subunit, chloroplastic 3 of Acetabularia acetabulum (Mermaid's wine glass).